A 166-amino-acid chain; its full sequence is Large ribosomal subunit protein mL49 (166 aa).

The tract at residues 56–78 is disordered; sequence RIPDPPKHEHYPTPSGWQPPRDP.

It belongs to the mitochondrion-specific ribosomal protein mL49 family. As to quaternary structure, component of the mitochondrial large ribosomal subunit (mt-LSU). Mature mammalian 55S mitochondrial ribosomes consist of a small (28S) and a large (39S) subunit. The 28S small subunit contains a 12S ribosomal RNA (12S mt-rRNA) and 30 different proteins. The 39S large subunit contains a 16S rRNA (16S mt-rRNA), a copy of mitochondrial valine transfer RNA (mt-tRNA(Val)), which plays an integral structural role, and 52 different proteins. Interacts with OXA1L. Ubiquitous.

Its subcellular location is the mitochondrion. The chain is Large ribosomal subunit protein mL49 (MRPL49) from Homo sapiens (Human).